We begin with the raw amino-acid sequence, 88 residues long: Small integral membrane protein 13 (88 aa).

Residues 10–30 (LVFVATLLIVLLLMVCGWYFV) traverse the membrane as a helical segment. Residues 48-60 (TGSQEGDNEQPSG) show a composition bias toward polar residues. The interval 48-88 (TGSQEGDNEQPSGSEAEEDPSASPHKMRSARQRRPPVDDGH) is disordered. Phosphoserine is present on residues serine 59, serine 61, and serine 70. Residues 72 to 81 (HKMRSARQRR) show a composition bias toward basic residues.

The protein belongs to the SMIM13 family.

The protein resides in the membrane. This Rattus norvegicus (Rat) protein is Small integral membrane protein 13 (Smim13).